The chain runs to 177 residues: ATP synthase subunit delta (177 aa).

It belongs to the ATPase delta chain family. As to quaternary structure, F-type ATPases have 2 components, F(1) - the catalytic core - and F(0) - the membrane proton channel. F(1) has five subunits: alpha(3), beta(3), gamma(1), delta(1), epsilon(1). F(0) has three main subunits: a(1), b(2) and c(10-14). The alpha and beta chains form an alternating ring which encloses part of the gamma chain. F(1) is attached to F(0) by a central stalk formed by the gamma and epsilon chains, while a peripheral stalk is formed by the delta and b chains.

It is found in the cell inner membrane. F(1)F(0) ATP synthase produces ATP from ADP in the presence of a proton or sodium gradient. F-type ATPases consist of two structural domains, F(1) containing the extramembraneous catalytic core and F(0) containing the membrane proton channel, linked together by a central stalk and a peripheral stalk. During catalysis, ATP synthesis in the catalytic domain of F(1) is coupled via a rotary mechanism of the central stalk subunits to proton translocation. In terms of biological role, this protein is part of the stalk that links CF(0) to CF(1). It either transmits conformational changes from CF(0) to CF(1) or is implicated in proton conduction. This is ATP synthase subunit delta from Colwellia psychrerythraea (strain 34H / ATCC BAA-681) (Vibrio psychroerythus).